Here is a 565-residue protein sequence, read N- to C-terminus: Ubiquitin carboxyl-terminal hydrolase 39 (565 aa).

Basic and acidic residues-rich tracts occupy residues 1-21 (MSGRSKRESRGSTRGKRESES) and 28-39 (VKRERDREREPE). Disordered regions lie at residues 1–61 (MSGR…SARE) and 75–96 (EREVDEDSEPEREVRAKNGRVD). Ser-46 is subject to Phosphoserine. Lys-51 participates in a covalent cross-link: Glycyl lysine isopeptide (Lys-Gly) (interchain with G-Cter in SUMO2). Phosphoserine is present on Ser-82. Positions 85-96 (EREVRAKNGRVD) are enriched in basic and acidic residues. The UBP-type; degenerate zinc-finger motif lies at 103-200 (RHCPYLDTIN…YVLKPTFTKQ (98 aa)). Residues Cys-136, Cys-139, His-155, and His-161 each contribute to the Zn(2+) site. The 331-residue stretch at 225–555 (VGLNNIKAND…EAYIQIWKRR (331 aa)) folds into the USP domain.

It belongs to the peptidase C19 family. The U4/U6-U5 tri-snRNP complex is a building block of the precatalytic spliceosome (spliceosome B complex). Component of the U4/U6-U5 tri-snRNP complex composed of the U4, U6 and U5 snRNAs and at least PRPF3, PRPF4, PRPF6, PRPF8, PRPF31, SNRNP200, TXNL4A, SNRNP40, SNRPB, SNRPD1, SNRPD2, SNRPD3, SNRPE, SNRPF, SNRPG, DDX23, CD2BP2, PPIH, SNU13, EFTUD2, SART1 and USP39, plus LSM2, LSM3, LSM4, LSM5, LSM6, LSM7 and LSM8.

The protein resides in the nucleus. The catalysed reaction is Thiol-dependent hydrolysis of ester, thioester, amide, peptide and isopeptide bonds formed by the C-terminal Gly of ubiquitin (a 76-residue protein attached to proteins as an intracellular targeting signal).. Its function is as follows. Deubiquitinating enzyme that plays a role in many cellular processes including cellular antiviral response, epithelial morphogenesis, DNA repair or B-cell development. Plays a role in pre-mRNA splicing as a component of the U4/U6-U5 tri-snRNP, one of the building blocks of the precatalytic spliceosome. Specifically regulates immunoglobulin gene rearrangement in a spliceosome-dependent manner, which involves modulating chromatin interactions at the Igh locus and therefore plays an essential role in B-cell development. Regulates AURKB mRNA levels, and thereby plays a role in cytokinesis and in the spindle checkpoint. Regulates apoptosis and G2/M cell cycle checkpoint in response to DNA damage by deubiquitinating and stabilizing CHK2. Also plays an important role in DNA repair by controlling the recruitment of XRCC4/LIG4 to DNA double-strand breaks for non-homologous end-joining repair. Participates in antiviral activity by affecting the type I IFN signaling by stabilizing STAT1 and decreasing its 'Lys-6'-linked ubiquitination. Contributes to non-canonical Wnt signaling during epidermal differentiation. Acts as a negative regulator NF-kappa-B activation through deubiquitination of 'Lys-48'-linked ubiquitination of NFKBIA. The polypeptide is Ubiquitin carboxyl-terminal hydrolase 39 (USP39) (Pongo abelii (Sumatran orangutan)).